We begin with the raw amino-acid sequence, 175 residues long: ATP synthase subunit b (175 aa).

A helical membrane pass occupies residues 22–42 (LNLLETNIINIAIVFGLLIFL).

This sequence belongs to the ATPase B chain family. In terms of assembly, F-type ATPases have 2 components, F(1) - the catalytic core - and F(0) - the membrane proton channel. F(1) has five subunits: alpha(3), beta(3), gamma(1), delta(1), epsilon(1). F(0) has four main subunits: a(1), b(1), b'(1) and c(10-14). The alpha and beta chains form an alternating ring which encloses part of the gamma chain. F(1) is attached to F(0) by a central stalk formed by the gamma and epsilon chains, while a peripheral stalk is formed by the delta, b and b' chains.

The protein resides in the cell inner membrane. Functionally, f(1)F(0) ATP synthase produces ATP from ADP in the presence of a proton or sodium gradient. F-type ATPases consist of two structural domains, F(1) containing the extramembraneous catalytic core and F(0) containing the membrane proton channel, linked together by a central stalk and a peripheral stalk. During catalysis, ATP synthesis in the catalytic domain of F(1) is coupled via a rotary mechanism of the central stalk subunits to proton translocation. Component of the F(0) channel, it forms part of the peripheral stalk, linking F(1) to F(0). The polypeptide is ATP synthase subunit b (Gloeobacter violaceus (strain ATCC 29082 / PCC 7421)).